The following is an 873-amino-acid chain: MNPGFDLSRRNPQEDFELIQRIGSGTYGDVYKARNVNTGELAAIKVIKLEPGEDFAVVQQEIIMMKDCKHANIVAYFGSYLRRDKLWICMEFCGGGSLQDIYHVTGPLSELQIAYVSRETLQGLYYLHSKGKMHRDIKGANILLTDNGHVKLADFGVSAQITATIAKRKSFIGTPYWMAPEVAAVERKGGYNQLCDLWAVGITAIELAELQPPMFDLHPMRALFLMTKSNFQPPKLKDKLKWSNSFHHFVKMALTKNPKKRPTAEKLLQHPFVTQPLTRSLAIELLDKVNNPDHSTYHDFDDDDPEPLVAVPHRIPSTSRNVREEKTRSEINFGQVKFDPPLRKETEPHHELDLQLEYGQGHQSNYFLGGNKSLLKSVEEELHQRGHVAHLEDDEGDDDDSKHSTLKAKVPPPLPPKPKSISIPQDTHSSEDSNQGTIKRCPSSGSPAKPSHVPPRPPPPRLPPQKPAVLGNGVSSFQLNGERDGSVHQQQSEQRGTNLSRKEKKDVPKPISNGLPPTPKVHMGACFSKVFNGCPLKIHCATSWINPDTRDQYLIFGAEEGIYTLNLNELHETSMEQLFPRRCTWLYVMNNCLLSVSGKASQLYSHNLPGLFDYARQMQKLPVAIPAHKLPDRILPRKFAVSAKIPETKWCQKCCVVRNPYTGHKYLCGALQTSIVLLEWVEPMQKFMLIKHIEFPMPCPLRMFEMLVVPEQEYPLVCVGVSRGRDFNQVVRFETVNPNSTSSWFTESDTPQTNVTHVTQLERDTILVCLDCCIKIVNLQGRLKSSRKLSSELTFDFQIESIVCLQDSVLAFWKHGMQGRSFRSNEVTQEISDNTRIFRLLGSDRVVVLESRPTDNPTANSNLYILAGHENSY.

Met1 bears the N-acetylmethionine mark. Positions 16 to 273 (FELIQRIGSG…AEKLLQHPFV (258 aa)) constitute a Protein kinase domain. ATP is bound by residues 22–30 (IGSGTYGDV) and Lys45. Asp136 acts as the Proton acceptor in catalysis. 2 positions are modified to phosphoserine: Ser329 and Ser377. The tract at residues 389–518 (AHLEDDEGDD…KPISNGLPPT (130 aa)) is disordered. Residues 452-466 (HVPPRPPPPRLPPQK) show a composition bias toward pro residues. Positions 487–499 (VHQQQSEQRGTNL) are enriched in polar residues. Residues 535 to 846 (PLKIHCATSW…IFRLLGSDRV (312 aa)) enclose the CNH domain.

This sequence belongs to the protein kinase superfamily. STE Ser/Thr protein kinase family. STE20 subfamily. Interacts with SH3GL2. Interaction appears to regulate MAP4K3-mediated JNK activation. Mg(2+) is required as a cofactor.

It catalyses the reaction L-seryl-[protein] + ATP = O-phospho-L-seryl-[protein] + ADP + H(+). The enzyme catalyses L-threonyl-[protein] + ATP = O-phospho-L-threonyl-[protein] + ADP + H(+). Its function is as follows. Serine/threonine kinase that plays a role in the response to environmental stress. Appears to act upstream of the JUN N-terminal pathway. Activator of the Hippo signaling pathway which plays a pivotal role in organ size control and tumor suppression by restricting proliferation and promoting apoptosis. MAP4Ks act in parallel to and are partially redundant with STK3/MST2 and STK4/MST2 in the phosphorylation and activation of LATS1/2, and establish MAP4Ks as components of the expanded Hippo pathway. This chain is Mitogen-activated protein kinase kinase kinase kinase 3 (Map4k3), found in Rattus norvegicus (Rat).